Here is a 378-residue protein sequence, read N- to C-terminus: Ribosomal RNA large subunit methyltransferase G (378 aa).

It belongs to the methyltransferase superfamily. RlmG family.

The protein resides in the cytoplasm. The catalysed reaction is guanosine(1835) in 23S rRNA + S-adenosyl-L-methionine = N(2)-methylguanosine(1835) in 23S rRNA + S-adenosyl-L-homocysteine + H(+). Specifically methylates the guanine in position 1835 (m2G1835) of 23S rRNA. This is Ribosomal RNA large subunit methyltransferase G from Salmonella arizonae (strain ATCC BAA-731 / CDC346-86 / RSK2980).